The sequence spans 793 residues: Transcription factor opdR (793 aa).

Disordered stretches follow at residues 1 to 29, 60 to 113, and 457 to 476; these read MAQD…DPCR, TASS…QSQN, and LDDE…QPSE. The segment at residues 25-53 is a DNA-binding region (zn(2)-C6 fungal-type); the sequence is CDPCRRRKVRCDRKFPCGQCERARTALQC.

The protein localises to the nucleus. Transcription factor; part of the gene cluster that mediates the biosynthesis of oxopyrrolidines, polyketide-amino acid hybrid compounds with feature structures of tetramic acid. This Penicillium oxalicum (strain 114-2 / CGMCC 5302) (Penicillium decumbens) protein is Transcription factor opdR.